The sequence spans 428 residues: Histidinol dehydrogenase (428 aa).

NAD(+) is bound by residues Tyr126, Gln188, and Asn211. Residues Ser234, Gln256, and His259 each coordinate substrate. Residues Gln256 and His259 each contribute to the Zn(2+) site. Residues Glu324 and His325 each act as proton acceptor in the active site. 4 residues coordinate substrate: His325, Asp358, Glu412, and His417. Asp358 contributes to the Zn(2+) binding site. His417 is a Zn(2+) binding site.

It belongs to the histidinol dehydrogenase family. It depends on Zn(2+) as a cofactor.

The enzyme catalyses L-histidinol + 2 NAD(+) + H2O = L-histidine + 2 NADH + 3 H(+). Its pathway is amino-acid biosynthesis; L-histidine biosynthesis; L-histidine from 5-phospho-alpha-D-ribose 1-diphosphate: step 9/9. Its function is as follows. Catalyzes the sequential NAD-dependent oxidations of L-histidinol to L-histidinaldehyde and then to L-histidine. This chain is Histidinol dehydrogenase, found in Chlorobaculum tepidum (strain ATCC 49652 / DSM 12025 / NBRC 103806 / TLS) (Chlorobium tepidum).